Consider the following 359-residue polypeptide: Phospho-N-acetylmuramoyl-pentapeptide-transferase (359 aa).

A run of 10 helical transmembrane segments spans residues 26–46 (TIYGGLTAFLICFLLGPWVIN), 73–93 (TMGGILILFSLGVSTLLWADL), 98–118 (ILITLLSMLLFGAIGFIDDYL), 134–154 (FLVQIMAGLVISYLVYLCPDF), 166–186 (FTPDLGIWYIPFATLVIVGTS), 197–217 (GLAIGPIIIAGVTYMIFAYVA), 234–254 (CGEITIVCGILAGAGLGFLWF), 261–281 (VFMGDTGSIPLGAILGTIAVI), 286–306 (ILLLVVGGLFVIEALSVIIQV), and 338–358 (IVRFWIIAITLALISLSTLKI).

The protein belongs to the glycosyltransferase 4 family. MraY subfamily. Requires Mg(2+) as cofactor.

The protein resides in the cell inner membrane. The catalysed reaction is UDP-N-acetyl-alpha-D-muramoyl-L-alanyl-gamma-D-glutamyl-meso-2,6-diaminopimeloyl-D-alanyl-D-alanine + di-trans,octa-cis-undecaprenyl phosphate = di-trans,octa-cis-undecaprenyl diphospho-N-acetyl-alpha-D-muramoyl-L-alanyl-D-glutamyl-meso-2,6-diaminopimeloyl-D-alanyl-D-alanine + UMP. It participates in cell wall biogenesis; peptidoglycan biosynthesis. Catalyzes the initial step of the lipid cycle reactions in the biosynthesis of the cell wall peptidoglycan: transfers peptidoglycan precursor phospho-MurNAc-pentapeptide from UDP-MurNAc-pentapeptide onto the lipid carrier undecaprenyl phosphate, yielding undecaprenyl-pyrophosphoryl-MurNAc-pentapeptide, known as lipid I. The protein is Phospho-N-acetylmuramoyl-pentapeptide-transferase of Desulforapulum autotrophicum (strain ATCC 43914 / DSM 3382 / VKM B-1955 / HRM2) (Desulfobacterium autotrophicum).